A 130-amino-acid polypeptide reads, in one-letter code: Small ribosomal subunit protein uS8 (130 aa).

It belongs to the universal ribosomal protein uS8 family. As to quaternary structure, part of the 30S ribosomal subunit.

Its function is as follows. One of the primary rRNA binding proteins, it binds directly to 16S rRNA central domain where it helps coordinate assembly of the platform of the 30S subunit. The chain is Small ribosomal subunit protein uS8 from Methanosphaerula palustris (strain ATCC BAA-1556 / DSM 19958 / E1-9c).